We begin with the raw amino-acid sequence, 376 residues long: Queuine tRNA-ribosyltransferase (376 aa).

Catalysis depends on aspartate 93, which acts as the Proton acceptor. Substrate contacts are provided by residues 93–97, aspartate 147, glutamine 191, and glycine 218; that span reads DSGGF. An RNA binding region spans residues 249 to 255; that stretch reads GVGKPED. Aspartate 268 serves as the catalytic Nucleophile. The RNA binding; important for wobble base 34 recognition stretch occupies residues 273–277; the sequence is TRNAR. The Zn(2+) site is built by cysteine 306, cysteine 308, cysteine 311, and histidine 337.

Belongs to the queuine tRNA-ribosyltransferase family. As to quaternary structure, homodimer. Within each dimer, one monomer is responsible for RNA recognition and catalysis, while the other monomer binds to the replacement base PreQ1. Requires Zn(2+) as cofactor.

The catalysed reaction is 7-aminomethyl-7-carbaguanine + guanosine(34) in tRNA = 7-aminomethyl-7-carbaguanosine(34) in tRNA + guanine. It participates in tRNA modification; tRNA-queuosine biosynthesis. Catalyzes the base-exchange of a guanine (G) residue with the queuine precursor 7-aminomethyl-7-deazaguanine (PreQ1) at position 34 (anticodon wobble position) in tRNAs with GU(N) anticodons (tRNA-Asp, -Asn, -His and -Tyr). Catalysis occurs through a double-displacement mechanism. The nucleophile active site attacks the C1' of nucleotide 34 to detach the guanine base from the RNA, forming a covalent enzyme-RNA intermediate. The proton acceptor active site deprotonates the incoming PreQ1, allowing a nucleophilic attack on the C1' of the ribose to form the product. After dissociation, two additional enzymatic reactions on the tRNA convert PreQ1 to queuine (Q), resulting in the hypermodified nucleoside queuosine (7-(((4,5-cis-dihydroxy-2-cyclopenten-1-yl)amino)methyl)-7-deazaguanosine). The protein is Queuine tRNA-ribosyltransferase of Histophilus somni (strain 129Pt) (Haemophilus somnus).